Here is a 485-residue protein sequence, read N- to C-terminus: Aspartyl/glutamyl-tRNA(Asn/Gln) amidotransferase subunit B (485 aa).

The protein belongs to the GatB/GatE family. GatB subfamily. Heterotrimer of A, B and C subunits.

The catalysed reaction is L-glutamyl-tRNA(Gln) + L-glutamine + ATP + H2O = L-glutaminyl-tRNA(Gln) + L-glutamate + ADP + phosphate + H(+). It catalyses the reaction L-aspartyl-tRNA(Asn) + L-glutamine + ATP + H2O = L-asparaginyl-tRNA(Asn) + L-glutamate + ADP + phosphate + 2 H(+). Its function is as follows. Allows the formation of correctly charged Asn-tRNA(Asn) or Gln-tRNA(Gln) through the transamidation of misacylated Asp-tRNA(Asn) or Glu-tRNA(Gln) in organisms which lack either or both of asparaginyl-tRNA or glutaminyl-tRNA synthetases. The reaction takes place in the presence of glutamine and ATP through an activated phospho-Asp-tRNA(Asn) or phospho-Glu-tRNA(Gln). The sequence is that of Aspartyl/glutamyl-tRNA(Asn/Gln) amidotransferase subunit B from Anaplasma marginale (strain St. Maries).